Here is a 239-residue protein sequence, read N- to C-terminus: Orotidine 5'-phosphate decarboxylase (239 aa).

Residues Asp10, Lys32, 59 to 68, Thr122, Arg184, Gln193, Gly213, and Arg214 each bind substrate; that span reads DLKLHDIPNT. Lys61 serves as the catalytic Proton donor.

It belongs to the OMP decarboxylase family. Type 1 subfamily. In terms of assembly, homodimer.

The catalysed reaction is orotidine 5'-phosphate + H(+) = UMP + CO2. It participates in pyrimidine metabolism; UMP biosynthesis via de novo pathway; UMP from orotate: step 2/2. Its function is as follows. Catalyzes the decarboxylation of orotidine 5'-monophosphate (OMP) to uridine 5'-monophosphate (UMP). The protein is Orotidine 5'-phosphate decarboxylase of Geobacillus thermodenitrificans (strain NG80-2).